The primary structure comprises 222 residues: Eukaryotic translation initiation factor 3 subunit K (222 aa).

The PCI domain maps to Y46–K208.

Belongs to the eIF-3 subunit K family. In terms of assembly, component of the eukaryotic translation initiation factor 3 (eIF-3) complex. The eIF-3 complex interacts with pix.

The protein localises to the cytoplasm. Its function is as follows. Component of the eukaryotic translation initiation factor 3 (eIF-3) complex, which is involved in protein synthesis of a specialized repertoire of mRNAs and, together with other initiation factors, stimulates binding of mRNA and methionyl-tRNAi to the 40S ribosome. The eIF-3 complex specifically targets and initiates translation of a subset of mRNAs involved in cell proliferation. The polypeptide is Eukaryotic translation initiation factor 3 subunit K (Drosophila virilis (Fruit fly)).